A 376-amino-acid polypeptide reads, in one-letter code: Chaperone protein DnaJ (376 aa).

In terms of domain architecture, J spans 5 to 70; the sequence is DYYEVLGVGR…DKKAAYDQFG (66 aa). Residues 132–210 form a CR-type zinc finger; it reads GLTKELRIPT…CHGEGRVEKS (79 aa). Residues cysteine 145, cysteine 148, cysteine 162, cysteine 165, cysteine 184, cysteine 187, cysteine 198, and cysteine 201 each contribute to the Zn(2+) site. CXXCXGXG motif repeat units lie at residues 145–152, 162–169, 184–191, and 198–205; these read CDLCDGSG, CGTCHGQG, CPTCHGRG, and CGKCHGEG.

It belongs to the DnaJ family. In terms of assembly, homodimer. Zn(2+) is required as a cofactor.

The protein resides in the cytoplasm. In terms of biological role, participates actively in the response to hyperosmotic and heat shock by preventing the aggregation of stress-denatured proteins and by disaggregating proteins, also in an autonomous, DnaK-independent fashion. Unfolded proteins bind initially to DnaJ; upon interaction with the DnaJ-bound protein, DnaK hydrolyzes its bound ATP, resulting in the formation of a stable complex. GrpE releases ADP from DnaK; ATP binding to DnaK triggers the release of the substrate protein, thus completing the reaction cycle. Several rounds of ATP-dependent interactions between DnaJ, DnaK and GrpE are required for fully efficient folding. Also involved, together with DnaK and GrpE, in the DNA replication of plasmids through activation of initiation proteins. The sequence is that of Chaperone protein DnaJ from Shewanella loihica (strain ATCC BAA-1088 / PV-4).